The primary structure comprises 495 residues: Putative aldehyde dehydrogenase AldA (495 aa).

212–218 (GKGSESG) is a binding site for NAD(+). Active-site residues include glutamate 256 and cysteine 290.

The protein belongs to the aldehyde dehydrogenase family.

The enzyme catalyses an aldehyde + NAD(+) + H2O = a carboxylate + NADH + 2 H(+). The chain is Putative aldehyde dehydrogenase AldA (aldA) from Staphylococcus aureus (strain Mu50 / ATCC 700699).